The sequence spans 245 residues: Polyhedrin (245 aa).

This sequence belongs to the polyhedrin family.

Functionally, major component of the virus occlusion bodies, which are large proteinaceous structures (polyhedra), that protect the virus from the outside environment for extended periods until they are ingested by insect larvae. This is Polyhedrin from Lepidoptera (butterflies and moths).